The chain runs to 90 residues: DNA-binding protein HU-alpha (90 aa).

The protein belongs to the bacterial histone-like protein family. Heterodimer of an alpha and a beta chain.

Functionally, histone-like DNA-binding protein which is capable of wrapping DNA to stabilize it, and thus to prevent its denaturation under extreme environmental conditions. This Pseudomonas aeruginosa (strain ATCC 15692 / DSM 22644 / CIP 104116 / JCM 14847 / LMG 12228 / 1C / PRS 101 / PAO1) protein is DNA-binding protein HU-alpha (hupA).